The primary structure comprises 376 residues: Succinyl-diaminopimelate desuccinylase (376 aa).

Zn(2+) is bound at residue histidine 67. The active site involves aspartate 69. Aspartate 100 is a Zn(2+) binding site. Glutamate 134 (proton acceptor) is an active-site residue. The Zn(2+) site is built by glutamate 135, glutamate 163, and histidine 349.

This sequence belongs to the peptidase M20A family. DapE subfamily. As to quaternary structure, homodimer. The cofactor is Zn(2+). Co(2+) is required as a cofactor.

It catalyses the reaction N-succinyl-(2S,6S)-2,6-diaminopimelate + H2O = (2S,6S)-2,6-diaminopimelate + succinate. Its pathway is amino-acid biosynthesis; L-lysine biosynthesis via DAP pathway; LL-2,6-diaminopimelate from (S)-tetrahydrodipicolinate (succinylase route): step 3/3. Catalyzes the hydrolysis of N-succinyl-L,L-diaminopimelic acid (SDAP), forming succinate and LL-2,6-diaminopimelate (DAP), an intermediate involved in the bacterial biosynthesis of lysine and meso-diaminopimelic acid, an essential component of bacterial cell walls. The sequence is that of Succinyl-diaminopimelate desuccinylase from Actinobacillus succinogenes (strain ATCC 55618 / DSM 22257 / CCUG 43843 / 130Z).